A 288-amino-acid polypeptide reads, in one-letter code: CBY1-interacting BAR domain-containing protein 2 (288 aa).

A BAR-like region spans residues 6 to 217; the sequence is SRDSQVRVME…ESYDLEKDLE (212 aa). 2 disordered regions span residues 133-157 and 256-288; these read QKSP…VDAS and TIRS…RLNQ. A compositionally biased stretch (polar residues) spans 138–157; it reads DRQTISQAETSVQRASVDAS. Residues 266–276 are compositionally biased toward acidic residues; the sequence is SEDDSAEEDPV.

The protein belongs to the CIBAR family. Homodimer (via BAR-like domain). Heterodimer (via BAR-like domain) with FAM92A. Interacts with CBY1.

The protein localises to the cytoplasm. It localises to the cytoskeleton. It is found in the microtubule organizing center. Its subcellular location is the centrosome. The protein resides in the centriole. The protein localises to the cilium basal body. Functionally, may play a role in ciliogenesis. In cooperation with CBY1 may facilitate ciliogenesis likely by the recruitment and fusion of endosomal vesicles at distal appendages during early stages of ciliogenesis. In Bos taurus (Bovine), this protein is CBY1-interacting BAR domain-containing protein 2 (CIBAR2).